We begin with the raw amino-acid sequence, 308 residues long: Flavonol synthase 3 (308 aa).

The 101-residue stretch at 167–267 (TIEYLMKINY…RISWPVFVES (101 aa)) folds into the Fe2OG dioxygenase domain. Residue 175-177 (NYY) coordinates 2-oxoglutarate. Fe cation contacts are provided by histidine 192, aspartate 194, and histidine 248. A 2-oxoglutarate-binding site is contributed by 258–260 (RIS).

The protein belongs to the iron/ascorbate-dependent oxidoreductase family. The cofactor is Fe(2+). As to expression, widely expressed at low levels.

The catalysed reaction is a (2R,3R)-dihydroflavonol + 2-oxoglutarate + O2 = a flavonol + succinate + CO2 + H2O. It functions in the pathway secondary metabolite biosynthesis; flavonoid biosynthesis. Its function is as follows. Catalyzes the formation of flavonols from dihydroflavonols. Possesses low activity in vitro towards dihydrokaempferol and dihydroquercetin producing kaempferol and quercitin, respectively. This Arabidopsis thaliana (Mouse-ear cress) protein is Flavonol synthase 3.